A 142-amino-acid chain; its full sequence is MAAAVAAAGAGEPLSPEELLPKAEAEKAEEELEEDDDDELDETLSERLWGLTEMFPERVRSAAGATFDLSLFVAQKMYRFSRAALWIGTTSFMILVLPVVFETEKLQMEQQQQLQQRQILLGPNTGLSGGMPGALPPLPGKM.

Low complexity predominate over residues M1 to E18. A disordered region spans residues M1–D41. Position 2 is an N-acetylalanine (A2). The Cytoplasmic segment spans residues A2–A83. At S15 the chain carries Phosphoserine. The span at K27–D41 shows a compositional bias: acidic residues. Residues D41–G50 form an import sequence; necessary for mitochondrion outer membrane localization and integration in the TOM complex region. The residue at position 43 (T43) is a Phosphothreonine. S45 is modified (phosphoserine). Positions A83–T103 are TMD; necessary for mitochondrion outer membrane localization and integration in the TOM complex. The helical transmembrane segment at A84–T103 threads the bilayer. At E104–M142 the chain is on the mitochondrial intermembrane side. The tract at residues P123–M142 is C-tail signal; necessary for mitochondrion outer membrane localization and integration in the TOM complex.

This sequence belongs to the Tom22 family. As to quaternary structure, forms part of the preprotein translocase complex of the outer mitochondrial membrane (TOM complex) which consists of at least 7 different proteins (TOMM5, TOMM6, TOMM7, TOMM20, TOMM22, TOMM40 and TOMM70). Interacts with PPP2R2B and TOMM40.

Its subcellular location is the mitochondrion outer membrane. Functionally, central receptor component of the translocase of the outer membrane of mitochondria (TOM complex) responsible for the recognition and translocation of cytosolically synthesized mitochondrial preproteins. Together with the peripheral receptor TOM20 functions as the transit peptide receptor and facilitates the movement of preproteins into the translocation pore. Required for the translocation across the mitochondrial outer membrane of cytochrome P450 monooxygenases. This Mus musculus (Mouse) protein is Mitochondrial import receptor subunit TOM22 homolog (Tomm22).